A 303-amino-acid polypeptide reads, in one-letter code: Protein transport protein SEC13-2 (303 aa).

6 WD repeats span residues 7 to 46 (AHEG…NSSS), 53 to 95 (GHEG…GKMQ), 102 to 143 (VHSA…IAST), 149 to 202 (AHKF…ETYV), 209 to 251 (GHKD…KKND), and 261 to 300 (KFEQ…KWEE).

Belongs to the WD repeat SEC13 family. In terms of assembly, the COPII coat is composed of at least 5 proteins: the SEC23/24 complex, the SEC13/31 complex, and the protein SAR1. Component of the nuclear pore complex (NPC). NPC constitutes the exclusive means of nucleocytoplasmic transport. NPCs allow the passive diffusion of ions and small molecules and the active, nuclear transport receptor-mediated bidirectional transport of macromolecules such as proteins, RNAs, ribonucleoparticles (RNPs), and ribosomal subunits across the nuclear envelope. Due to its 8-fold rotational symmetry, all subunits are present with 8 copies or multiples thereof.

It localises to the cytoplasmic vesicle. It is found in the COPII-coated vesicle membrane. Its subcellular location is the endoplasmic reticulum membrane. The protein localises to the nucleus. The protein resides in the nuclear pore complex. Functionally, component of the coat protein complex II (COPII) which promotes the formation of transport vesicles from the endoplasmic reticulum (ER). The coat has two main functions, the physical deformation of the endoplasmic reticulum membrane into vesicles and the selection of cargo molecules. It also functions as a component of the nuclear pore complex (NPC). NPC components, collectively referred to as nucleoporins (NUPs), can play the role of both NPC structural components and of docking or interaction partners for transiently associated nuclear transport factors. SEC13 is required for efficient mRNA export from the nucleus to the cytoplasm and for correct nuclear pore biogenesis and distribution. This is Protein transport protein SEC13-2 (SEC132) from Candida glabrata (strain ATCC 2001 / BCRC 20586 / JCM 3761 / NBRC 0622 / NRRL Y-65 / CBS 138) (Yeast).